The following is a 249-amino-acid chain: uncharacterized protein (249 aa).

This is an uncharacterized protein from Methanocaldococcus jannaschii (strain ATCC 43067 / DSM 2661 / JAL-1 / JCM 10045 / NBRC 100440) (Methanococcus jannaschii).